We begin with the raw amino-acid sequence, 297 residues long: Urease accessory protein UreD (297 aa).

The span at 1–18 (MNSSAASPPAVSPHAAPS) shows a compositional bias: low complexity. Disordered stretches follow at residues 1 to 20 (MNSS…PSRT) and 178 to 201 (VDQA…PRRR).

The protein belongs to the UreD family. As to quaternary structure, ureD, UreF and UreG form a complex that acts as a GTP-hydrolysis-dependent molecular chaperone, activating the urease apoprotein by helping to assemble the nickel containing metallocenter of UreC. The UreE protein probably delivers the nickel.

Its subcellular location is the cytoplasm. Required for maturation of urease via the functional incorporation of the urease nickel metallocenter. The sequence is that of Urease accessory protein UreD from Parafrankia sp. (strain EAN1pec).